A 284-amino-acid chain; its full sequence is Agamous-like MADS-box protein AGL49 (284 aa).

The disordered stretch occupies residues 1–20 (MAPRQKKPNKSDDDDGDLHR). Residues 21-66 (KKQSFFKQRFPGFKKKASELSVLCGNSVGFICYGPDNDLHVWPQSQ) enclose the MADS-box domain.

Interacts with MEE14/CBP1.

Its subcellular location is the nucleus. In terms of biological role, probable transcription factor that may function in the maintenance of the proper function of the central cell in pollen tube attraction. This is Agamous-like MADS-box protein AGL49 from Arabidopsis thaliana (Mouse-ear cress).